The sequence spans 274 residues: Sulfur carrier protein FdhD (274 aa).

Cys121 acts as the Cysteine persulfide intermediate in catalysis. Residue 258–263 coordinates Mo-bis(molybdopterin guanine dinucleotide); that stretch reads FSKPGR.

This sequence belongs to the FdhD family.

It localises to the cytoplasm. Functionally, required for formate dehydrogenase (FDH) activity. Acts as a sulfur carrier protein that transfers sulfur from IscS to the molybdenum cofactor prior to its insertion into FDH. The polypeptide is Sulfur carrier protein FdhD (Yersinia pestis bv. Antiqua (strain Antiqua)).